A 633-amino-acid chain; its full sequence is DNA mismatch repair protein MutL (633 aa).

This sequence belongs to the DNA mismatch repair MutL/HexB family.

Its function is as follows. This protein is involved in the repair of mismatches in DNA. It is required for dam-dependent methyl-directed DNA mismatch repair. May act as a 'molecular matchmaker', a protein that promotes the formation of a stable complex between two or more DNA-binding proteins in an ATP-dependent manner without itself being part of a final effector complex. In Pseudomonas fluorescens (strain SBW25), this protein is DNA mismatch repair protein MutL.